The primary structure comprises 568 residues: Zinc finger protein 583 (568 aa).

The 72-residue stretch at 6–77 (LTFEDVSVNF…QKKGARDTCP (72 aa)) folds into the KRAB domain. 12 C2H2-type zinc fingers span residues 211–233 (LKCS…QRIH), 239–261 (YACV…KRIH), 267–289 (YECK…QRVH), 295–317 (YQCK…QRIH), 323–345 (FECI…QRIH), 351–373 (YVCH…QRIH), 379–401 (YECK…QRVH), 407–429 (YECK…QRVH), 435–457 (YECA…QRSH), 463–485 (YICK…QRIH), 491–513 (YECN…QRIH), and 519–541 (YECK…EKVH).

This sequence belongs to the krueppel C2H2-type zinc-finger protein family.

The protein resides in the nucleus. Its function is as follows. May be involved in transcriptional regulation. This Mus musculus (Mouse) protein is Zinc finger protein 583 (Znf583).